A 577-amino-acid polypeptide reads, in one-letter code: 2-succinyl-5-enolpyruvyl-6-hydroxy-3-cyclohexene-1-carboxylate synthase (577 aa).

Belongs to the TPP enzyme family. MenD subfamily. Homodimer. The cofactor is Mg(2+). It depends on Mn(2+) as a cofactor. Thiamine diphosphate is required as a cofactor.

It catalyses the reaction isochorismate + 2-oxoglutarate + H(+) = 5-enolpyruvoyl-6-hydroxy-2-succinyl-cyclohex-3-ene-1-carboxylate + CO2. Its pathway is quinol/quinone metabolism; 1,4-dihydroxy-2-naphthoate biosynthesis; 1,4-dihydroxy-2-naphthoate from chorismate: step 2/7. It functions in the pathway quinol/quinone metabolism; menaquinone biosynthesis. Its function is as follows. Catalyzes the thiamine diphosphate-dependent decarboxylation of 2-oxoglutarate and the subsequent addition of the resulting succinic semialdehyde-thiamine pyrophosphate anion to isochorismate to yield 2-succinyl-5-enolpyruvyl-6-hydroxy-3-cyclohexene-1-carboxylate (SEPHCHC). The protein is 2-succinyl-5-enolpyruvyl-6-hydroxy-3-cyclohexene-1-carboxylate synthase of Enterococcus faecalis (strain ATCC 700802 / V583).